We begin with the raw amino-acid sequence, 430 residues long: Histidine--tRNA ligase (430 aa).

Belongs to the class-II aminoacyl-tRNA synthetase family. Homodimer.

The protein localises to the cytoplasm. It carries out the reaction tRNA(His) + L-histidine + ATP = L-histidyl-tRNA(His) + AMP + diphosphate + H(+). The protein is Histidine--tRNA ligase of Chlamydia felis (strain Fe/C-56) (Chlamydophila felis).